The following is a 227-amino-acid chain: Orotidine 5'-phosphate decarboxylase (227 aa).

Substrate-binding positions include Asp8, Lys30, 57–66 (DLKFHDIPNT), Thr116, Arg177, Gln186, Gly206, and Arg207. Lys59 acts as the Proton donor in catalysis.

This sequence belongs to the OMP decarboxylase family. Type 1 subfamily. As to quaternary structure, homodimer.

It carries out the reaction orotidine 5'-phosphate + H(+) = UMP + CO2. It participates in pyrimidine metabolism; UMP biosynthesis via de novo pathway; UMP from orotate: step 2/2. Catalyzes the decarboxylation of orotidine 5'-monophosphate (OMP) to uridine 5'-monophosphate (UMP). This Acinetobacter baumannii (strain AB307-0294) protein is Orotidine 5'-phosphate decarboxylase.